Here is a 268-residue protein sequence, read N- to C-terminus: tRNA (guanine-N(7)-)-methyltransferase (268 aa).

The tract at residues 1 to 21 (MMAGAEAPQPQKRYYRQRAHS) is disordered. Ser21 bears the Phosphoserine mark. S-adenosyl-L-methionine-binding residues include Gly78, Glu101, Arg103, Asn134, Ala135, and Leu154. Residue Asp157 is part of the active site. An alphaC helix region spans residues 158-166 (PHFKRTKHK). Thr232 and Glu234 together coordinate S-adenosyl-L-methionine. Residues 232-240 (TEEGKKVLR) are alpha6 helix.

This sequence belongs to the class I-like SAM-binding methyltransferase superfamily. TrmB family. Catalytic component of the METTL1-WDR4 complex, composed of METTL1 and WDR4. In terms of processing, phosphorylation at Ser-21 by PKB/AKT1 inactivates its methyltransferase activity via a steric interference mechanism in the active site that locally disrupts the catalytic center. Phosphorylation at Ser-21 does not affect the interaction with WDR4.

It localises to the nucleus. The catalysed reaction is guanosine(46) in tRNA + S-adenosyl-L-methionine = N(7)-methylguanosine(46) in tRNA + S-adenosyl-L-homocysteine. It catalyses the reaction a guanosine in mRNA + S-adenosyl-L-methionine = an N(7)-methylguanosine in mRNA + S-adenosyl-L-homocysteine. It carries out the reaction a guanosine in miRNA + S-adenosyl-L-methionine = an N(7)-methylguanosine in miRNA + S-adenosyl-L-homocysteine. It functions in the pathway tRNA modification; N(7)-methylguanine-tRNA biosynthesis. In terms of biological role, catalytic component of METTL1-WDR4 methyltransferase complex that mediates the formation of N(7)-methylguanine in a subset of RNA species, such as tRNAs, mRNAs and microRNAs (miRNAs). Catalyzes the formation of N(7)-methylguanine at position 46 (m7G46) in a large subset of tRNAs that contain the 5'-RAGGU-3' motif within the variable loop. M7G46 interacts with C13-G22 in the D-loop to stabilize tRNA tertiary structure and protect tRNAs from decay. Also acts as a methyltransferase for a subset of internal N(7)-methylguanine in mRNAs. Internal N(7)-methylguanine methylation of mRNAs in response to stress promotes their relocalization to stress granules, thereby suppressing their translation. Also methylates a specific subset of miRNAs, such as let-7. N(7)-methylguanine methylation of let-7 miRNA promotes let-7 miRNA processing by disrupting an inhibitory secondary structure within the primary miRNA transcript (pri-miRNA). Acts as a regulator of embryonic stem cell self-renewal and differentiation. In Mus musculus (Mouse), this protein is tRNA (guanine-N(7)-)-methyltransferase.